A 64-amino-acid chain; its full sequence is Large ribosomal subunit protein bL35 (64 aa).

This sequence belongs to the bacterial ribosomal protein bL35 family.

This is Large ribosomal subunit protein bL35 from Chlorobium limicola (strain DSM 245 / NBRC 103803 / 6330).